A 118-amino-acid polypeptide reads, in one-letter code: LYR motif containing protein 1 (118 aa).

Positions Thr-91–Thr-118 are disordered. Positions Lys-93–Ala-107 are enriched in basic residues.

It belongs to the complex I LYR family.

This is LYR motif containing protein 1 (lyrm1) from Danio rerio (Zebrafish).